A 148-amino-acid chain; its full sequence is UPF0756 membrane protein KPK_3307 (148 aa).

The next 4 membrane-spanning stretches (helical) occupy residues 14–34, 51–71, 86–106, and 121–141; these read ALGF…LIIV, LTVG…SGTL, LLAI…VSLM, and VLGV…AGII.

This sequence belongs to the UPF0756 family.

The protein resides in the cell membrane. The chain is UPF0756 membrane protein KPK_3307 from Klebsiella pneumoniae (strain 342).